A 124-amino-acid polypeptide reads, in one-letter code: Small ribosomal subunit protein uS12cz/uS12cy (124 aa).

The protein belongs to the universal ribosomal protein uS12 family. As to quaternary structure, part of the 30S ribosomal subunit.

The protein localises to the plastid. In terms of biological role, with S4 and S5 plays an important role in translational accuracy. Located at the interface of the 30S and 50S subunits. The sequence is that of Small ribosomal subunit protein uS12cz/uS12cy (rps12-A) from Epifagus virginiana (Beechdrops).